Reading from the N-terminus, the 183-residue chain is Ribulose bisphosphate carboxylase small subunit, chloroplastic 3 (183 aa).

The N-terminal 43 residues, 1–43 (MATTMLNRSVIVNKEVAKTPNFPRATKNNKGFASNAAVQKCRD), are a transit peptide targeting the chloroplast.

This sequence belongs to the RuBisCO small chain family. Heterohexadecamer of 8 large and 8 small subunits.

Its subcellular location is the plastid. It is found in the chloroplast. Its function is as follows. RuBisCO catalyzes two reactions: the carboxylation of D-ribulose 1,5-bisphosphate, the primary event in carbon dioxide fixation, as well as the oxidative fragmentation of the pentose substrate. Both reactions occur simultaneously and in competition at the same active site. Although the small subunit is not catalytic it is essential for maximal activity. This is Ribulose bisphosphate carboxylase small subunit, chloroplastic 3 from Acetabularia peniculus (Green alga).